A 135-amino-acid polypeptide reads, in one-letter code: Ribosome-binding factor A (135 aa).

This sequence belongs to the RbfA family. Monomer. Binds 30S ribosomal subunits, but not 50S ribosomal subunits or 70S ribosomes.

The protein localises to the cytoplasm. Functionally, one of several proteins that assist in the late maturation steps of the functional core of the 30S ribosomal subunit. Associates with free 30S ribosomal subunits (but not with 30S subunits that are part of 70S ribosomes or polysomes). Required for efficient processing of 16S rRNA. May interact with the 5'-terminal helix region of 16S rRNA. The sequence is that of Ribosome-binding factor A from Rhodopseudomonas palustris (strain HaA2).